We begin with the raw amino-acid sequence, 318 residues long: Probable aminopeptidase YbaC (318 aa).

Ser-115 acts as the Nucleophile in catalysis. The active site involves Asp-266. His-296 (proton donor) is an active-site residue.

Belongs to the peptidase S33 family.

In terms of biological role, probable aminopeptidase. This Bacillus subtilis (strain 168) protein is Probable aminopeptidase YbaC (ybaC).